Reading from the N-terminus, the 281-residue chain is Insulin-like growth factor-binding protein 2 (281 aa).

Residues 1 to 21 form the signal peptide; it reads MVLSEHLLVLLGAVLCAPALS. Residues 23-106 form the IGFBP N-terminal domain; that stretch reads VLFRCPPCSP…VLGLGTCGKR (84 aa). 6 disulfide bridges follow: Cys-27–Cys-56, Cys-30–Cys-58, Cys-38–Cys-59, Cys-47–Cys-62, Cys-70–Cys-83, and Cys-77–Cys-103. 2 disordered regions span residues 107–127 and 139–180; these read RDAEYGSSQERGTELPEDQSD and PAVP…RPAR. Residues 156–176 show a composition bias toward basic and acidic residues; sequence VNRERANEQHRSKTNKSEDKK. Residues 180–262 enclose the Thyroglobulin type-1 domain; the sequence is RSLCQLQLDQ…SPTVRGDPEC (83 aa). Cystine bridges form between Cys-183-Cys-217, Cys-228-Cys-239, and Cys-241-Cys-262. A Cell attachment site motif is present at residues 257 to 259; the sequence is RGD.

Interacts with igf1 and igf2.

Its subcellular location is the secreted. IGF-binding proteins prolong the half-life of the IGFs and have been shown to either inhibit or stimulate the growth promoting effects of the IGFs on cell culture. They alter the interaction of IGFs with their cell surface receptors. This is Insulin-like growth factor-binding protein 2 (igfbp2) from Xenopus laevis (African clawed frog).